The sequence spans 413 residues: Hemolin (413 aa).

An N-terminal signal peptide occupies residues 1–19 (MAFKSIAVLSACIIVGSAL). Ig-like C2-type domains lie at 25-112 (PVLK…RVIS), 122-211 (PAKT…EEVV), 233-322 (PQYV…LKLT), and 327-413 (PKYE…VQVN). 4 disulfides stabilise this stretch: Cys-46-Cys-97, Cys-140-Cys-199, Cys-252-Cys-305, and Cys-349-Cys-395. N-linked (GlcNAc...) asparagine glycosylation occurs at Asn-283.

Belongs to the hemolin family. In terms of tissue distribution, hemolymph.

Its subcellular location is the secreted. The protein localises to the extracellular space. Functionally, insect-immune protein. Forms a protein complex at the bacterial surface. Can inhibit hemocyte aggregation. The chain is Hemolin from Hyalophora cecropia (Cecropia moth).